The sequence spans 215 residues: 3-isopropylmalate dehydratase small subunit (215 aa).

It belongs to the LeuD family. LeuD type 1 subfamily. Heterodimer of LeuC and LeuD.

The catalysed reaction is (2R,3S)-3-isopropylmalate = (2S)-2-isopropylmalate. Its pathway is amino-acid biosynthesis; L-leucine biosynthesis; L-leucine from 3-methyl-2-oxobutanoate: step 2/4. Catalyzes the isomerization between 2-isopropylmalate and 3-isopropylmalate, via the formation of 2-isopropylmaleate. The sequence is that of 3-isopropylmalate dehydratase small subunit from Cellvibrio japonicus (strain Ueda107) (Pseudomonas fluorescens subsp. cellulosa).